The following is a 182-amino-acid chain: Ribosome-recycling factor (182 aa).

It belongs to the RRF family.

The protein resides in the cytoplasm. In terms of biological role, responsible for the release of ribosomes from messenger RNA at the termination of protein biosynthesis. May increase the efficiency of translation by recycling ribosomes from one round of translation to another. This chain is Ribosome-recycling factor, found in Mycoplasma capricolum subsp. capricolum (strain California kid / ATCC 27343 / NCTC 10154).